A 418-amino-acid polypeptide reads, in one-letter code: Ras association domain-containing protein 5 (418 aa).

The interval 1-118 (MAMASPAIGQ…QPQDPRVPAE (118 aa)) is disordered. A2 carries the N-acetylthreonine modification. The span at 77-89 (SRPARPLRPGLQQ) shows a compositional bias: low complexity. Residues 122–170 (GHCFAELVLPGGPGWCDLCGREVLRQALRCTNCKFTCHPECRSLIQLDC) form a Phorbol-ester/DAG-type zinc finger. 2 positions are modified to phosphoserine: S182 and S279. The 91-residue stretch at 274 to 364 (TDKRTSFYLP…LSFVLKENET (91 aa)) folds into the Ras-associating domain. Position 352 is a phosphothreonine (T352). Residues 366 to 413 (EVEWDAFSIPELQNFLTILEKEEQDKIQQVQKKYDKFRQKLEEALRES) form the SARAH domain.

Interacts directly with activated HRAS; a RASSF5-STK4/MST1 complex probably associates with activated HRAS. Interacts with KRAS. Probably interacts with Ras-like GTPases RRAS, MRAS, RAP1B, RAP2A and RALA. Interacts with RRAS2. Can self-associate. Interacts with RSSF1 isoform A. The RSSF1 isoform A-RSSF5 heterodimer probably mediates the association of RSSF1 with HRAS. Isoform 2 interacts with activated RAP1A and ITGAL/LFA-1. Binds STK4/MST1, inhibiting STK4/MST1 autoactivation. As to expression, widely expressed. Frequently down-regulated in lung tumor cell lines and primary lung tumors.

It is found in the cytoplasm. The protein resides in the cytoskeleton. Its function is as follows. Potential tumor suppressor. Seems to be involved in lymphocyte adhesion by linking RAP1A activation upon T-cell receptor or chemokine stimulation to integrin activation. Isoform 2 stimulates lymphocyte polarization and the patch-like distribution of ITGAL/LFA-1, resulting in an enhanced adhesion to ICAM1. Together with RAP1A may participate in regulation of microtubule growth. The association of isoform 2 with activated RAP1A is required for directional movement of endothelial cells during wound healing. May be involved in regulation of Ras apoptotic function. The RASSF5-STK4/MST1 complex may mediate HRAS and KRAS induced apoptosis. In Homo sapiens (Human), this protein is Ras association domain-containing protein 5 (RASSF5).